The following is a 352-amino-acid chain: Mas-related G-protein coupled receptor member X2 (352 aa).

The Extracellular portion of the chain corresponds to 1–45 (MEERNISGRDLRVDSNITYWGTNITAVNESNHTGMSFCEVVSCTM). Asn-5, Asn-16, Asn-23, Asn-28, and Asn-31 each carry an N-linked (GlcNAc...) asparagine glycan. Residues 46-66 (VFLSLIVALVGLVGNATVLWF) form a helical membrane-spanning segment. Residues 67 to 75 (LGFQMRRNA) lie on the Cytoplasmic side of the membrane. The chain crosses the membrane as a helical span at residues 76–96 (FSVYILNLAGADFLFICFQIG). Residues 97-107 (YCFHMILDIDS) lie on the Extracellular side of the membrane. A helical membrane pass occupies residues 108–128 (IPIEIDLFYLVVLNFPYFCGL). At 129–155 (SILSAISIERCLSVMWPIWYHCQRPRH) the chain is on the cytoplasmic side. Residues 156–176 (TSAVICTLLWVLSLVCSLLEG) form a helical membrane-spanning segment. Over 177–195 (KECGFLYYTSDPGWCKTFD) the chain is Extracellular. Residues 196–216 (LITATWLIVLFVALLGSSLAL) form a helical membrane-spanning segment. Over 217–239 (VITIFWGLHKIPVTRLYVAIVFT) the chain is Cytoplasmic. A helical membrane pass occupies residues 240–260 (VLVFLLFGLPYGIYWFLLVWI). The Extracellular segment spans residues 261 to 275 (EKFYYVLPCSIYPVT). The chain crosses the membrane as a helical span at residues 276-296 (VFLSCVNSSAKPIIYCLVGSI). The Cytoplasmic portion of the chain corresponds to 297-347 (RHHRFQRKTLKLFLQRAMQDTPEEEECGEMGSSGRSREIKTIWKGLRAALI).

Belongs to the G-protein coupled receptor 1 family. Mas subfamily.

The protein resides in the cell membrane. Orphan receptor. Probably involved in the function of nociceptive neurons. May regulate nociceptor function and/or development, including the sensation or modulation of pain. The protein is Mas-related G-protein coupled receptor member X2 (Mrgprx2) of Mus musculus (Mouse).